Consider the following 472-residue polypeptide: PEP-dependent dihydroxyacetone kinase, phosphoryl donor subunit DhaM (472 aa).

Positions 1–135 (MVNLVIVSHS…HALEAKREQL (135 aa)) constitute a PTS EIIA type-4 domain. Residue His-9 is the Tele-phosphohistidine intermediate of the active site. Residues 155-242 (ARSLAVVIKN…QLAEDNFGET (88 aa)) enclose the HPr domain. Residue His-169 is the Pros-phosphohistidine intermediate of the active site. Residues 264 to 472 (QPVLCTVQAK…VKTQRFNRQG (209 aa)) are PTS EI-like, N-terminal part. Catalysis depends on His-430, which acts as the Tele-phosphohistidine intermediate.

It belongs to the PEP-utilizing enzyme family. Homodimer. The dihydroxyacetone kinase complex is composed of a homodimer of DhaM, a homodimer of DhaK and the subunit DhaL.

It carries out the reaction dihydroxyacetone + phosphoenolpyruvate = dihydroxyacetone phosphate + pyruvate. It participates in polyol metabolism; glycerol degradation. Its function is as follows. Component of the dihydroxyacetone kinase complex, which is responsible for the phosphoenolpyruvate (PEP)-dependent phosphorylation of dihydroxyacetone. DhaM serves as the phosphoryl donor. Is phosphorylated by phosphoenolpyruvate in an EI- and HPr-dependent reaction, and a phosphorelay system on histidine residues finally leads to phosphoryl transfer to DhaL and dihydroxyacetone. This is PEP-dependent dihydroxyacetone kinase, phosphoryl donor subunit DhaM from Escherichia coli (strain K12).